Here is a 222-residue protein sequence, read N- to C-terminus: Large ribosomal subunit protein uL1 (222 aa).

This sequence belongs to the universal ribosomal protein uL1 family. As to quaternary structure, part of the 50S ribosomal subunit.

Functionally, binds directly to 23S rRNA. Probably involved in E site tRNA release. In terms of biological role, protein L1 is also a translational repressor protein, it controls the translation of its operon by binding to its mRNA. The polypeptide is Large ribosomal subunit protein uL1 (Pyrobaculum neutrophilum (strain DSM 2338 / JCM 9278 / NBRC 100436 / V24Sta) (Thermoproteus neutrophilus)).